The sequence spans 114 residues: T cell receptor alpha variable 3 (114 aa).

Positions 1 to 20 are cleaved as a signal peptide; that stretch reads MASAPISMLAMLFTLSGLRA. The region spanning 21–114 is the Ig-like domain; sequence QSVAQPEDQV…SALYFCAVRD (94 aa). C42 and C110 are disulfide-bonded. N-linked (GlcNAc...) asparagine glycosylation is present at N87.

Alpha-beta TR is a heterodimer composed of an alpha and beta chain; disulfide-linked. The alpha-beta TR is associated with the transmembrane signaling CD3 coreceptor proteins to form the TR-CD3 (TcR or TCR). The assembly of alpha-beta TR heterodimers with CD3 occurs in the endoplasmic reticulum where a single alpha-beta TR heterodimer associates with one CD3D-CD3E heterodimer, one CD3G-CD3E heterodimer and one CD247 homodimer forming a stable octameric structure. CD3D-CD3E and CD3G-CD3E heterodimers preferentially associate with TR alpha and TR beta chains, respectively. The association of the CD247 homodimer is the last step of TcR assembly in the endoplasmic reticulum and is required for transport to the cell surface.

It localises to the cell membrane. V region of the variable domain of T cell receptor (TR) alpha chain that participates in the antigen recognition. Alpha-beta T cell receptors are antigen specific receptors which are essential to the immune response and are present on the cell surface of T lymphocytes. Recognize peptide-major histocompatibility (MH) (pMH) complexes that are displayed by antigen presenting cells (APC), a prerequisite for efficient T cell adaptive immunity against pathogens. Binding of alpha-beta TR to pMH complex initiates TR-CD3 clustering on the cell surface and intracellular activation of LCK that phosphorylates the ITAM motifs of CD3G, CD3D, CD3E and CD247 enabling the recruitment of ZAP70. In turn ZAP70 phosphorylates LAT, which recruits numerous signaling molecules to form the LAT signalosome. The LAT signalosome propagates signal branching to three major signaling pathways, the calcium, the mitogen-activated protein kinase (MAPK) kinase and the nuclear factor NF-kappa-B (NF-kB) pathways, leading to the mobilization of transcription factors that are critical for gene expression and essential for T cell growth and differentiation. The T cell repertoire is generated in the thymus, by V-(D)-J rearrangement. This repertoire is then shaped by intrathymic selection events to generate a peripheral T cell pool of self-MH restricted, non-autoaggressive T cells. Post-thymic interaction of alpha-beta TR with the pMH complexes shapes TR structural and functional avidity. This is T cell receptor alpha variable 3 from Homo sapiens (Human).